Reading from the N-terminus, the 503-residue chain is Probable cytosol aminopeptidase (503 aa).

Mn(2+)-binding residues include Lys-270 and Asp-275. Lys-282 is a catalytic residue. Residues Asp-293, Asp-352, and Glu-354 each contribute to the Mn(2+) site. The active site involves Arg-356.

This sequence belongs to the peptidase M17 family. It depends on Mn(2+) as a cofactor.

Its subcellular location is the cytoplasm. It carries out the reaction Release of an N-terminal amino acid, Xaa-|-Yaa-, in which Xaa is preferably Leu, but may be other amino acids including Pro although not Arg or Lys, and Yaa may be Pro. Amino acid amides and methyl esters are also readily hydrolyzed, but rates on arylamides are exceedingly low.. The catalysed reaction is Release of an N-terminal amino acid, preferentially leucine, but not glutamic or aspartic acids.. Its function is as follows. Presumably involved in the processing and regular turnover of intracellular proteins. Catalyzes the removal of unsubstituted N-terminal amino acids from various peptides. The protein is Probable cytosol aminopeptidase of Serratia proteamaculans (strain 568).